The chain runs to 171 residues: uncharacterized protein (171 aa).

It belongs to the transferase hexapeptide repeat family.

This is an uncharacterized protein from Bacillus subtilis (strain 168).